The chain runs to 189 residues: Phosphoheptose isomerase (189 aa).

The SIS domain maps to 33–189; it reads CTDTLKAGNK…ELVEREIYGG (157 aa). Residue 48 to 50 coordinates substrate; sequence NGG. H57 and E61 together coordinate Zn(2+). Substrate-binding positions include E61, 90–91, 116–118, S121, and Q168; these read ND and STS. 2 residues coordinate Zn(2+): Q168 and H176.

Belongs to the SIS family. GmhA subfamily. Requires Zn(2+) as cofactor.

The protein resides in the cytoplasm. It carries out the reaction 2 D-sedoheptulose 7-phosphate = D-glycero-alpha-D-manno-heptose 7-phosphate + D-glycero-beta-D-manno-heptose 7-phosphate. Its pathway is carbohydrate biosynthesis; D-glycero-D-manno-heptose 7-phosphate biosynthesis; D-glycero-alpha-D-manno-heptose 7-phosphate and D-glycero-beta-D-manno-heptose 7-phosphate from sedoheptulose 7-phosphate: step 1/1. In terms of biological role, catalyzes the isomerization of sedoheptulose 7-phosphate in D-glycero-D-manno-heptose 7-phosphate. The sequence is that of Phosphoheptose isomerase from Akkermansia muciniphila (strain ATCC BAA-835 / DSM 22959 / JCM 33894 / BCRC 81048 / CCUG 64013 / CIP 107961 / Muc).